The primary structure comprises 305 residues: Glycine--tRNA ligase alpha subunit (305 aa).

It belongs to the class-II aminoacyl-tRNA synthetase family. In terms of assembly, tetramer of two alpha and two beta subunits.

It is found in the cytoplasm. It catalyses the reaction tRNA(Gly) + glycine + ATP = glycyl-tRNA(Gly) + AMP + diphosphate. This chain is Glycine--tRNA ligase alpha subunit, found in Streptococcus pneumoniae (strain CGSP14).